The chain runs to 389 residues: Glutamate 5-kinase (389 aa).

Lys-26 contributes to the ATP binding site. Ser-66, Asp-153, and Asn-167 together coordinate substrate. Thr-187–Asp-188 is an ATP binding site. Positions Ala-293–Arg-371 constitute a PUA domain.

This sequence belongs to the glutamate 5-kinase family.

The protein localises to the cytoplasm. It catalyses the reaction L-glutamate + ATP = L-glutamyl 5-phosphate + ADP. The protein operates within amino-acid biosynthesis; L-proline biosynthesis; L-glutamate 5-semialdehyde from L-glutamate: step 1/2. Its function is as follows. Catalyzes the transfer of a phosphate group to glutamate to form L-glutamate 5-phosphate. The polypeptide is Glutamate 5-kinase (Rhodopirellula baltica (strain DSM 10527 / NCIMB 13988 / SH1)).